Consider the following 154-residue polypeptide: Myoglobin (154 aa).

Residues 2 to 148 enclose the Globin domain; the sequence is GLSDGEWQLV…FRNDIAAKYK (147 aa). Ser-4 carries the phosphoserine modification. His-65 lines the nitrite pocket. His-65 serves as a coordination point for O2. A Phosphothreonine modification is found at Thr-68. Residue His-94 participates in heme b binding.

The protein belongs to the globin family. As to quaternary structure, monomeric.

The protein localises to the cytoplasm. It is found in the sarcoplasm. The enzyme catalyses Fe(III)-heme b-[protein] + nitric oxide + H2O = Fe(II)-heme b-[protein] + nitrite + 2 H(+). The catalysed reaction is H2O2 + AH2 = A + 2 H2O. In terms of biological role, monomeric heme protein which primary function is to store oxygen and facilitate its diffusion within muscle tissues. Reversibly binds oxygen through a pentacoordinated heme iron and enables its timely and efficient release as needed during periods of heightened demand. Depending on the oxidative conditions of tissues and cells, and in addition to its ability to bind oxygen, it also has a nitrite reductase activity whereby it regulates the production of bioactive nitric oxide. Under stress conditions, like hypoxia and anoxia, it also protects cells against reactive oxygen species thanks to its pseudoperoxidase activity. The sequence is that of Myoglobin (MB) from Ondatra zibethicus (Muskrat).